The primary structure comprises 531 residues: Maturase K (531 aa).

The protein belongs to the intron maturase 2 family. MatK subfamily.

It is found in the plastid. The protein resides in the chloroplast. Usually encoded in the trnK tRNA gene intron. Probably assists in splicing its own and other chloroplast group II introns. This is Maturase K from Ephedra sinica (Chinese ephedra).